Reading from the N-terminus, the 305-residue chain is Heme A synthase (305 aa).

At 1–6 (MKKFLK) the chain is on the cytoplasmic side. A helical transmembrane segment spans residues 7 to 27 (VWSVLTIICMTVVVFGGALVT). Topologically, residues 28 to 63 (KTGSADGCGNSWPLCNGQLVRLTDVTPEKLIEFMHR) are extracellular. A disulfide bond links Cys35 and Cys42. Glu59 is a catalytic residue. His62 contacts heme o. A helical membrane pass occupies residues 64-84 (MTTGISSIFVIVLAICAWIYM). Residues 85–92 (KNRRETKP) are Cytoplasmic-facing. A helical membrane pass occupies residues 93–113 (LAIIAVLFLIIQALMGMAAVV). Residues 114 to 122 (WGQNPYIMA) lie on the Extracellular side of the membrane. The helical transmembrane segment at 123 to 143 (LHFGISIICYASIVLLALMIF) threads the bilayer. His124 serves as a coordination point for heme o. At 144-160 (EVDRKFDARNLVMGTKL) the chain is on the cytoplasmic side. Residues 161-181 (RVNIYALTIYTYLAVYTGALV) traverse the membrane as a helical segment. Residues 182–212 (RHEKASMAVPVWPFENGHFIMPTSVQDYVQY) lie on the Extracellular side of the membrane. The chain crosses the membrane as a helical span at residues 213-233 (FHRLAAFILIVWLLYVTWLVF). His214 serves as a coordination point for heme b. The Cytoplasmic portion of the chain corresponds to 234 to 240 (RDYRRYR). A helical transmembrane segment spans residues 241 to 261 (VLTFSMVLSLVFIALQAVTGA). At 262-271 (LSVYTGVNLY) the chain is on the extracellular side. A helical membrane pass occupies residues 272–292 (IALAHSLIITMLFALLCYLCL). His276 serves as a coordination point for heme b. Residues 293-305 (LASRSKSNRLRIK) lie on the Cytoplasmic side of the membrane.

This sequence belongs to the COX15/CtaA family. Type 1 subfamily. In terms of assembly, interacts with CtaB. It depends on heme b as a cofactor.

The protein localises to the cell membrane. It carries out the reaction Fe(II)-heme o + 2 A + H2O = Fe(II)-heme a + 2 AH2. It functions in the pathway porphyrin-containing compound metabolism; heme A biosynthesis; heme A from heme O: step 1/1. Its function is as follows. Catalyzes the conversion of heme O to heme A by two successive hydroxylations of the methyl group at C8. The first hydroxylation forms heme I, the second hydroxylation results in an unstable dihydroxymethyl group, which spontaneously dehydrates, resulting in the formyl group of heme A. The protein is Heme A synthase of Listeria monocytogenes serovar 1/2a (strain ATCC BAA-679 / EGD-e).